A 181-amino-acid polypeptide reads, in one-letter code: RING-H2 finger protein ATL72 (181 aa).

A helical transmembrane segment spans residues 34 to 54; that stretch reads VIILAALLCALICALSLNSAL. Residues 114–156 form an RING-type; atypical zinc finger; the sequence is CLICLGDFEDGEKVRVLPKCNHGFHVRCIDTWLLSRSSCPTCR.

It belongs to the RING-type zinc finger family. ATL subfamily.

The protein localises to the membrane. The catalysed reaction is S-ubiquitinyl-[E2 ubiquitin-conjugating enzyme]-L-cysteine + [acceptor protein]-L-lysine = [E2 ubiquitin-conjugating enzyme]-L-cysteine + N(6)-ubiquitinyl-[acceptor protein]-L-lysine.. Its pathway is protein modification; protein ubiquitination. The sequence is that of RING-H2 finger protein ATL72 (ATL72) from Arabidopsis thaliana (Mouse-ear cress).